The chain runs to 270 residues: Hydroxyethylthiazole kinase (270 aa).

Residue methionine 44 coordinates substrate. ATP contacts are provided by arginine 119 and threonine 165. Glycine 192 is a binding site for substrate.

It belongs to the Thz kinase family. Requires Mg(2+) as cofactor.

The catalysed reaction is 5-(2-hydroxyethyl)-4-methylthiazole + ATP = 4-methyl-5-(2-phosphooxyethyl)-thiazole + ADP + H(+). The protein operates within cofactor biosynthesis; thiamine diphosphate biosynthesis; 4-methyl-5-(2-phosphoethyl)-thiazole from 5-(2-hydroxyethyl)-4-methylthiazole: step 1/1. In terms of biological role, catalyzes the phosphorylation of the hydroxyl group of 4-methyl-5-beta-hydroxyethylthiazole (THZ). The polypeptide is Hydroxyethylthiazole kinase (Corynebacterium efficiens (strain DSM 44549 / YS-314 / AJ 12310 / JCM 11189 / NBRC 100395)).